Here is a 502-residue protein sequence, read N- to C-terminus: Galactose/methyl galactoside import ATP-binding protein MglA (502 aa).

ABC transporter domains lie at leucine 10 to glutamate 245 and asparagine 255 to leucine 502. Residue glycine 42 to serine 49 coordinates ATP.

The protein belongs to the ABC transporter superfamily. Galactose/methyl galactoside importer (TC 3.A.1.2.3) family. As to quaternary structure, the complex is composed of one ATP-binding protein (MglA), two transmembrane proteins (MglC) and a solute-binding protein (MglB).

It localises to the cell inner membrane. It carries out the reaction D-galactose(out) + ATP + H2O = D-galactose(in) + ADP + phosphate + H(+). The catalysed reaction is methyl beta-D-galactoside(out) + ATP + H2O = methyl beta-D-galactoside(in) + ADP + phosphate + H(+). In terms of biological role, part of the ABC transporter complex MglABC involved in galactose/methyl galactoside import. Responsible for energy coupling to the transport system. In Vibrio cholerae serotype O1 (strain ATCC 39315 / El Tor Inaba N16961), this protein is Galactose/methyl galactoside import ATP-binding protein MglA.